The sequence spans 452 residues: tRNA modification GTPase MnmE (452 aa).

Residues arginine 21, glutamate 78, and lysine 118 each coordinate (6S)-5-formyl-5,6,7,8-tetrahydrofolate. A TrmE-type G domain is found at 214-375; that stretch reads GMKVVIAGRP…LREHLKQAMG (162 aa). Asparagine 224 is a K(+) binding site. GTP-binding positions include 224–229, 243–249, and 268–271; these read NAGKSS, TDIAGTT, and DTAG. Position 228 (serine 228) interacts with Mg(2+). K(+) is bound by residues threonine 243, isoleucine 245, and threonine 248. Threonine 249 is a Mg(2+) binding site. Lysine 452 contributes to the (6S)-5-formyl-5,6,7,8-tetrahydrofolate binding site.

It belongs to the TRAFAC class TrmE-Era-EngA-EngB-Septin-like GTPase superfamily. TrmE GTPase family. In terms of assembly, homodimer. Heterotetramer of two MnmE and two MnmG subunits. The cofactor is K(+).

The protein localises to the cytoplasm. Its function is as follows. Exhibits a very high intrinsic GTPase hydrolysis rate. Involved in the addition of a carboxymethylaminomethyl (cmnm) group at the wobble position (U34) of certain tRNAs, forming tRNA-cmnm(5)s(2)U34. The protein is tRNA modification GTPase MnmE of Haemophilus influenzae (strain PittEE).